The chain runs to 269 residues: MRYTILTKGDSKSNALKHKMMNYMKDFRMIEDSENPEIVISVGGDGTLLQAFHQYSHMLSKVAFVGVHTGHLGFYADWLPHEVEKLIIEINNSEFQVIEYPLLEIIMRYNDNGYETRYLALNEATMKTENGSTLVVDVNLRGKHFERFRGDGLCVSTPSGSTAYNKALGGALIHPSLEAMQITEIASINNRVFRTVGSPLVLPKHHTCLISPVNHDTIRMTIDHVSIKHKNVNSIQYRVANEKVRFARFRPFPFWKRVHDSFISSDEER.

Aspartate 45 serves as the catalytic Proton acceptor. Residues 45–46 (DG), 122–123 (NE), arginine 149, aspartate 151, and alanine 186 contribute to the NAD(+) site.

This sequence belongs to the NAD kinase family. The cofactor is a divalent metal cation.

It localises to the cytoplasm. The enzyme catalyses NAD(+) + ATP = ADP + NADP(+) + H(+). In terms of biological role, involved in the regulation of the intracellular balance of NAD and NADP, and is a key enzyme in the biosynthesis of NADP. Catalyzes specifically the phosphorylation on 2'-hydroxyl of the adenosine moiety of NAD to yield NADP. The protein is NAD kinase of Staphylococcus aureus (strain Mu3 / ATCC 700698).